The following is a 308-amino-acid chain: MSKLIYGLAGPTASGKTSLSILLAKKINAEIISVDSSLVYKGMDIGTAKPTLQEQDGIKHHLIDIIEPTGNFSVADFISSVNKLKKEIWARGREVLLVGGTMLYFKGLIEGLSALPESQAEIREALEYQKKAKGLQYLHQQLSEIDPQSAQKINPNDQQRIFRALEVIMISGKKYSELVKTSKVGGLDEELKLCALVPNDRSILHKNIESRFRQMLDQGFLDEVQNLRKNRMLTKETTAIRSVGYRQAWEYLDGDISYDEFVKKGIVATRQLAKRQLTWIRNWQSSINIVAMENETKELDILKYFGYK.

10 to 17 (GPTASGKT) provides a ligand contact to ATP. 12 to 17 (TASGKT) provides a ligand contact to substrate. Interaction with substrate tRNA stretches follow at residues 35–38 (DSSL) and 159–163 (QRIFR).

It belongs to the IPP transferase family. Monomer. Mg(2+) serves as cofactor.

The enzyme catalyses adenosine(37) in tRNA + dimethylallyl diphosphate = N(6)-dimethylallyladenosine(37) in tRNA + diphosphate. Functionally, catalyzes the transfer of a dimethylallyl group onto the adenine at position 37 in tRNAs that read codons beginning with uridine, leading to the formation of N6-(dimethylallyl)adenosine (i(6)A). The sequence is that of tRNA dimethylallyltransferase from Francisella tularensis subsp. novicida (strain U112).